Here is a 265-residue protein sequence, read N- to C-terminus: Probable S-methyl-5'-thioinosine phosphorylase (265 aa).

Residues serine 15 and 55–56 (RH) each bind phosphate. Methionine 187 is a substrate binding site. Threonine 188 is a phosphate binding site. Substrate is bound at residue 211–213 (NYA).

Belongs to the PNP/MTAP phosphorylase family. MTAP subfamily. As to quaternary structure, homotrimer.

It carries out the reaction S-methyl-5'-thioinosine + phosphate = 5-(methylsulfanyl)-alpha-D-ribose 1-phosphate + hypoxanthine. The protein operates within purine metabolism; purine nucleoside salvage. Functionally, catalyzes the reversible phosphorylation of S-methyl-5'-thioinosine (MTI) to hypoxanthine and 5-methylthioribose-1-phosphate. Involved in the breakdown of S-methyl-5'-thioadenosine (MTA), a major by-product of polyamine biosynthesis. Catabolism of (MTA) occurs via deamination to MTI and phosphorolysis to hypoxanthine. In Thermodesulfovibrio yellowstonii (strain ATCC 51303 / DSM 11347 / YP87), this protein is Probable S-methyl-5'-thioinosine phosphorylase.